The following is a 413-amino-acid chain: NAD-dependent dihydropyrimidine dehydrogenase subunit PreT (413 aa).

NAD(+) is bound at residue E287.

It belongs to the NADH dehydrogenase family. Heterotetramer of 2 PreA and 2 PreT subunits.

The enzyme catalyses 5,6-dihydrouracil + NAD(+) = uracil + NADH + H(+). The catalysed reaction is 5,6-dihydrothymine + NAD(+) = thymine + NADH + H(+). Functionally, involved in pyrimidine base degradation. Catalyzes physiologically the reduction of uracil to 5,6-dihydrouracil (DHU) by using NADH as a specific cosubstrate. It also catalyzes the reverse reaction and the reduction of thymine to 5,6-dihydrothymine (DHT). This Salmonella typhimurium (strain LT2 / SGSC1412 / ATCC 700720) protein is NAD-dependent dihydropyrimidine dehydrogenase subunit PreT (preT).